Here is a 338-residue protein sequence, read N- to C-terminus: Aspartate carbamoyltransferase catalytic subunit (338 aa).

Arginine 71 and threonine 72 together coordinate carbamoyl phosphate. Lysine 99 contacts L-aspartate. Residues arginine 121, histidine 151, and glutamine 154 each contribute to the carbamoyl phosphate site. Residues arginine 184 and arginine 239 each contribute to the L-aspartate site. 2 residues coordinate carbamoyl phosphate: glycine 280 and proline 281.

It belongs to the aspartate/ornithine carbamoyltransferase superfamily. ATCase family. In terms of assembly, heterododecamer (2C3:3R2) of six catalytic PyrB chains organized as two trimers (C3), and six regulatory PyrI chains organized as three dimers (R2).

The enzyme catalyses carbamoyl phosphate + L-aspartate = N-carbamoyl-L-aspartate + phosphate + H(+). Its pathway is pyrimidine metabolism; UMP biosynthesis via de novo pathway; (S)-dihydroorotate from bicarbonate: step 2/3. Catalyzes the condensation of carbamoyl phosphate and aspartate to form carbamoyl aspartate and inorganic phosphate, the committed step in the de novo pyrimidine nucleotide biosynthesis pathway. This chain is Aspartate carbamoyltransferase catalytic subunit, found in Stutzerimonas stutzeri (strain A1501) (Pseudomonas stutzeri).